Consider the following 578-residue polypeptide: SUMOylated effector protein AmpA (578 aa).

A disordered region spans residues proline 144–aspartate 169. 3 tandem repeats follow at residues threonine 180–alanine 272, lysine 304–glutamate 425, and threonine 428–glutamate 557. Positions threonine 180–glutamate 557 are 3 X approximate tandem repeats. A disordered region spans residues valine 516–tyrosine 578.

Polysumoylated during infection on at least two lysine residues, in the N- and C-terminal section. SUMO2/3 modification of AmpA throughout the infection cycle is likely critical for bacterial intracellular survival, while terminal SUMO1 conjugation of AmpA may promote a late-stage infection cycle event. Only a small portion of the available AmpA pool is actually SUMOylated at any given time.

It localises to the secreted. Its subcellular location is the host membrane. The protein localises to the host cytoplasm. It is found in the host cytosol. In terms of biological role, secreted effector that hijacks host cell SUMOylation during A.phagocytophilum infection and is important for the pathogen's intracellular survival. The protein is SUMOylated effector protein AmpA of Anaplasma phagocytophilum (strain HZ).